Consider the following 225-residue polypeptide: Orotate phosphoribosyltransferase (225 aa).

5-phospho-alpha-D-ribose 1-diphosphate is bound by residues R107, K108, K111, and 133 to 141; that span reads EDLTTDGGS. Position 137 (T137) interacts with orotate.

Belongs to the purine/pyrimidine phosphoribosyltransferase family. PyrE subfamily. As to quaternary structure, homodimer. Mg(2+) serves as cofactor.

The enzyme catalyses orotidine 5'-phosphate + diphosphate = orotate + 5-phospho-alpha-D-ribose 1-diphosphate. Its pathway is pyrimidine metabolism; UMP biosynthesis via de novo pathway; UMP from orotate: step 1/2. Catalyzes the transfer of a ribosyl phosphate group from 5-phosphoribose 1-diphosphate to orotate, leading to the formation of orotidine monophosphate (OMP). The sequence is that of Orotate phosphoribosyltransferase from Roseobacter denitrificans (strain ATCC 33942 / OCh 114) (Erythrobacter sp. (strain OCh 114)).